A 1865-amino-acid polypeptide reads, in one-letter code: Dedicator of cytokinesis protein 1 (1865 aa).

In terms of domain architecture, SH3 spans 9-70 (REEKYGVAFY…PASYIHLKEA (62 aa)). A C2 DOCK-type domain is found at 425 to 609 (RNDIYVTLVQ…DSFQISTLVC (185 aa)). One can recognise a DOCKER domain in the interval 1207–1617 (YKEIEREEMY…VEKQYGVRTM (411 aa)). The disordered stretch occupies residues 1613 to 1723 (GVRTMPSGLD…FKPADSSLQQ (111 aa)). Residues 1639–1664 (PSSSRPLSVASVSSFSSDSTPSRPGS) show a composition bias toward low complexity. Basic and acidic residues predominate over residues 1680-1694 (RSQDKLDKDDPDKEK). At S1681 the chain carries Phosphoserine. Positions 1687–1695 (KDDPDKEKK) are phosphoinositide-binding. Residues 1695 to 1704 (KDKKKEKRNS) are compositionally biased toward basic residues. Positions 1705 to 1716 (KHQEIFDKEFKP) are enriched in basic and acidic residues. A phosphoserine mark is found at S1743, S1756, S1761, and S1764. 2 disordered regions span residues 1753–1778 (RRFS…AKLS) and 1801–1865 (PLPL…GIVQ). Positions 1756–1766 (SVSPASPSSQQ) are enriched in low complexity. T1767 and T1772 each carry phosphothreonine. The segment at 1793–1819 (MDVADVPPPLPLKGNMADYGNLMENQD) is interaction with NCK2 second and third SH3 domain (minor). Positions 1799–1805 (PPPLPLK) match the SH3-binding; interaction with CRK motif. Residues 1820 to 1836 (MMVSPTSPPPPPPQRQQ) form an interaction with NCK2 third SH3 domain (major) region. Positions 1825-1851 (TSPPPPPPQRQQPPPLPSKTPPPPPPK) are enriched in pro residues. Positions 1837–1852 (PPPLPSKTPPPPPPKT) are interaction with NCK2 (minor). The short motif at 1838–1843 (PPLPSK) is the SH3-binding; interaction with CRK element. S1858 is modified (phosphoserine).

The protein belongs to the DOCK family. Interacts with the SH3 domains of CRK and NCK2 via multiple sites. Interacts with nucleotide-free RAC1 via its DOCKER domain. Interacts with ELMO1, ELMO2 and probably ELMO3 via its SH3 domain. Interacts with RAC1. Interacts with ELMO1 and ADGRB1. Identified in a complex with AUTS2 and ELMO2.

It is found in the cytoplasm. It localises to the membrane. Functionally, involved in cytoskeletal rearrangements required for phagocytosis of apoptotic cells and cell motility. Along with DOCK1, mediates CRK/CRKL regulation of epithelial and endothelial cell spreading and migration on type IV collagen. Functions as a guanine nucleotide exchange factor (GEF), which activates Rac Rho small GTPases by exchanging bound GDP for free GTP. Its GEF activity may be enhanced by ELMO1. The sequence is that of Dedicator of cytokinesis protein 1 (Dock1) from Mus musculus (Mouse).